A 156-amino-acid chain; its full sequence is MLDIVLYQPEIPPNTGNIIRLCANTGYRLHLIEPLGFEWDDKRVKRAGLDYHEFAEVKRWPNFEAFLEAVAPTRVFACTTKGRTAHSAVQFAAGDALLFGPESRGLPIEIIESLPFEQRLRIPMLPQSRSMNLANAVAVFVYESWRQLGYAGSLQE.

Positions 100, 122, and 130 each coordinate S-adenosyl-L-methionine.

The protein belongs to the class IV-like SAM-binding methyltransferase superfamily. RNA methyltransferase TrmH family. TrmL subfamily. As to quaternary structure, homodimer.

The protein resides in the cytoplasm. It carries out the reaction cytidine(34) in tRNA + S-adenosyl-L-methionine = 2'-O-methylcytidine(34) in tRNA + S-adenosyl-L-homocysteine + H(+). It catalyses the reaction 5-carboxymethylaminomethyluridine(34) in tRNA(Leu) + S-adenosyl-L-methionine = 5-carboxymethylaminomethyl-2'-O-methyluridine(34) in tRNA(Leu) + S-adenosyl-L-homocysteine + H(+). Functionally, methylates the ribose at the nucleotide 34 wobble position in the two leucyl isoacceptors tRNA(Leu)(CmAA) and tRNA(Leu)(cmnm5UmAA). Catalyzes the methyl transfer from S-adenosyl-L-methionine to the 2'-OH of the wobble nucleotide. This chain is tRNA (cytidine(34)-2'-O)-methyltransferase, found in Aeromonas hydrophila subsp. hydrophila (strain ATCC 7966 / DSM 30187 / BCRC 13018 / CCUG 14551 / JCM 1027 / KCTC 2358 / NCIMB 9240 / NCTC 8049).